A 356-amino-acid polypeptide reads, in one-letter code: Tetraacyldisaccharide 4'-kinase (356 aa).

Residue 51–58 (GWGGSGKT) participates in ATP binding.

The protein belongs to the LpxK family.

The enzyme catalyses a lipid A disaccharide + ATP = a lipid IVA + ADP + H(+). The protein operates within glycolipid biosynthesis; lipid IV(A) biosynthesis; lipid IV(A) from (3R)-3-hydroxytetradecanoyl-[acyl-carrier-protein] and UDP-N-acetyl-alpha-D-glucosamine: step 6/6. Transfers the gamma-phosphate of ATP to the 4'-position of a tetraacyldisaccharide 1-phosphate intermediate (termed DS-1-P) to form tetraacyldisaccharide 1,4'-bis-phosphate (lipid IVA). In Oleidesulfovibrio alaskensis (strain ATCC BAA-1058 / DSM 17464 / G20) (Desulfovibrio alaskensis), this protein is Tetraacyldisaccharide 4'-kinase.